The chain runs to 644 residues: Anti-sigma-I factor RsgI3 (644 aa).

The Cytoplasmic segment spans residues 1-56 (MDNIGVIIKIEGNEAIVMTDDCSFKKVPIKDGMHPGQKILVPNNEVIQKENKSIKR). The RsgI N-terminal anti-sigma domain maps to 3-50 (NIGVIIKIEGNEAIVMTDDCSFKKVPIKDGMHPGQKILVPNNEVIQKE). Residues 57–77 (ISAVATGIAAVFLMVLSLIWI) traverse the membrane as a helical segment. Residues 78-644 (NKPGRPDGIY…VVPSKNLFAD (567 aa)) are Extracellular-facing. Residues 302–328 (PTNTPSISTKPSATPAENPTPKLTQKP) are compositionally biased toward polar residues. The disordered stretch occupies residues 302 to 359 (PTNTPSISTKPSATPAENPTPKLTQKPTPVPAKTGERTSTTPTPTPAPTVRNGTGSGL). 2 PA14 domains span residues 354-491 (GTGS…PSSQ) and 502-640 (KDVN…PSKN).

In terms of assembly, interacts (via RsgI N-terminal anti-sigma domain) with SigI3.

Its subcellular location is the cell membrane. In terms of biological role, anti-sigma factor for SigI3. Negatively regulates SigI3 activity through direct interaction. Binding of the polysaccharide substrate to the extracellular C-terminal sensing domain of RsgI3 may induce a conformational change in its N-terminal cytoplasmic region, leading to the release and activation of SigI3. The chain is Anti-sigma-I factor RsgI3 from Acetivibrio thermocellus (strain ATCC 27405 / DSM 1237 / JCM 9322 / NBRC 103400 / NCIMB 10682 / NRRL B-4536 / VPI 7372) (Clostridium thermocellum).